The primary structure comprises 473 residues: Arginine biosynthesis bifunctional protein ArgJ, mitochondrial (473 aa).

Positions 201, 230, 241, 328, 468, and 473 each coordinate substrate. Catalysis depends on Thr241, which acts as the Nucleophile.

Belongs to the ArgJ family. In terms of assembly, heterodimer of an alpha and a beta chain. The alpha and beta chains are autoproteolytically processed from a single precursor protein within the mitochondrion.

It is found in the mitochondrion matrix. The enzyme catalyses N(2)-acetyl-L-ornithine + L-glutamate = N-acetyl-L-glutamate + L-ornithine. It catalyses the reaction L-glutamate + acetyl-CoA = N-acetyl-L-glutamate + CoA + H(+). It functions in the pathway amino-acid biosynthesis; L-arginine biosynthesis; L-ornithine and N-acetyl-L-glutamate from L-glutamate and N(2)-acetyl-L-ornithine (cyclic): step 1/1. It participates in amino-acid biosynthesis; L-arginine biosynthesis; N(2)-acetyl-L-ornithine from L-glutamate: step 1/4. Functionally, catalyzes two activities which are involved in the cyclic version of arginine biosynthesis: the synthesis of acetylglutamate from glutamate and acetyl-CoA, and of ornithine by transacetylation between acetylornithine and glutamate. The protein is Arginine biosynthesis bifunctional protein ArgJ, mitochondrial of Paracoccidioides lutzii (strain ATCC MYA-826 / Pb01) (Paracoccidioides brasiliensis).